Reading from the N-terminus, the 104-residue chain is Evasin P1174 (104 aa).

The signal sequence occupies residues 1-27 (LKTFCLFLQIAVFIALGIQIFLCGTDA). 3 cysteine pairs are disulfide-bonded: Cys40-Cys59, Cys44-Cys61, and Cys55-Cys72. N-linked (GlcNAc...) asparagine glycosylation is found at Asn43, Asn49, and Asn58. Positions 85 to 104 (KPTSEEIADASPRPKETNSH) are disordered.

Its subcellular location is the secreted. Its function is as follows. Salivary chemokine-binding protein which binds to host chemokines CXCL1 and CXCL8. The polypeptide is Evasin P1174 (Ixodes ricinus (Common tick)).